The primary structure comprises 269 residues: GATA transcription factor 3 (269 aa).

The Nuclear localization signal signature appears at K136–R143. A GATA-type zinc finger spans residues L176–N230. Positions K245 to W269 are disordered.

Belongs to the type IV zinc-finger family. Class A subfamily. Mostly expressed in roots. Also expressed in stems, flowers and leaves.

The protein localises to the nucleus. In terms of biological role, transcriptional activator that specifically binds 5'-GATA-3' or 5'-GAT-3' motifs within gene promoters. May be involved in the regulation of some light-responsive genes. The chain is GATA transcription factor 3 (GATA3) from Arabidopsis thaliana (Mouse-ear cress).